Consider the following 403-residue polypeptide: Probable tRNA sulfurtransferase (403 aa).

Positions 60–165 (QLAEERLKPI…KEGVFLSCRT (106 aa)) constitute a THUMP domain. ATP is bound by residues 183–184 (ML), 208–209 (HF), Arg265, Gly287, and Gln296.

This sequence belongs to the ThiI family.

It localises to the cytoplasm. The enzyme catalyses [ThiI sulfur-carrier protein]-S-sulfanyl-L-cysteine + a uridine in tRNA + 2 reduced [2Fe-2S]-[ferredoxin] + ATP + H(+) = [ThiI sulfur-carrier protein]-L-cysteine + a 4-thiouridine in tRNA + 2 oxidized [2Fe-2S]-[ferredoxin] + AMP + diphosphate. It carries out the reaction [ThiS sulfur-carrier protein]-C-terminal Gly-Gly-AMP + S-sulfanyl-L-cysteinyl-[cysteine desulfurase] + AH2 = [ThiS sulfur-carrier protein]-C-terminal-Gly-aminoethanethioate + L-cysteinyl-[cysteine desulfurase] + A + AMP + 2 H(+). Its pathway is cofactor biosynthesis; thiamine diphosphate biosynthesis. Catalyzes the ATP-dependent transfer of a sulfur to tRNA to produce 4-thiouridine in position 8 of tRNAs, which functions as a near-UV photosensor. Also catalyzes the transfer of sulfur to the sulfur carrier protein ThiS, forming ThiS-thiocarboxylate. This is a step in the synthesis of thiazole, in the thiamine biosynthesis pathway. The sulfur is donated as persulfide by IscS. The sequence is that of Probable tRNA sulfurtransferase from Listeria innocua serovar 6a (strain ATCC BAA-680 / CLIP 11262).